A 170-amino-acid polypeptide reads, in one-letter code: Ureidoglycolate lyase (170 aa).

This sequence belongs to the ureidoglycolate lyase family. In terms of assembly, homodimer. It depends on Ni(2+) as a cofactor.

The enzyme catalyses (S)-ureidoglycolate = urea + glyoxylate. It functions in the pathway nitrogen metabolism; (S)-allantoin degradation. Its function is as follows. Catalyzes the catabolism of the allantoin degradation intermediate (S)-ureidoglycolate, generating urea and glyoxylate. Involved in the utilization of allantoin as nitrogen source. This chain is Ureidoglycolate lyase, found in Burkholderia mallei (strain NCTC 10247).